The sequence spans 179 residues: Nucleoside diphosphate kinase 6 (179 aa).

6 residues coordinate ATP: lysine 18, phenylalanine 67, arginine 95, threonine 101, arginine 115, and asparagine 125. The active-site Pros-phosphohistidine intermediate is the histidine 128.

It belongs to the NDK family. Mg(2+) serves as cofactor.

The enzyme catalyses a 2'-deoxyribonucleoside 5'-diphosphate + ATP = a 2'-deoxyribonucleoside 5'-triphosphate + ADP. It carries out the reaction a ribonucleoside 5'-diphosphate + ATP = a ribonucleoside 5'-triphosphate + ADP. In terms of biological role, major role in the synthesis of nucleoside triphosphates other than ATP. The ATP gamma phosphate is transferred to the NDP beta phosphate via a ping-pong mechanism, using a phosphorylated active-site intermediate. The chain is Nucleoside diphosphate kinase 6 (nme6) from Xenopus tropicalis (Western clawed frog).